Reading from the N-terminus, the 172-residue chain is MESRFKLKEEYHQSCCAIQVRVPVIKTSSTKRKTELYTTGPFIMRSSSPSQPPSIKAQHRIAKHKAIRRRRIDLNCGCSIFYHIKCADHGFTHRGEHHCASGREFRFYLGGTKSPLFQDHAGGRSSIHTDKDIPHPSQVQSQPQESTGSPQSIPELPSLDDIDSSFWDDIFK.

The short motif at 56–71 (KAQHRIAKHKAIRRRR) is the Nuclear localization signal element. The segment at 76-93 (CGCSIFYHIKCADHGFTH) is a zinc-finger region. Positions 119–172 (DHAGGRSSIHTDKDIPHPSQVQSQPQESTGSPQSIPELPSLDDIDSSFWDDIFK) are disordered. The span at 137-152 (SQVQSQPQESTGSPQS) shows a compositional bias: polar residues. A transactivation region spans residues 158 to 172 (SLDDIDSSFWDDIFK).

This sequence belongs to the geminiviridae transcriptional activator protein family. Monomer. Homodimer. Homooligomer. Self-interaction correlates with nuclear localization and efficient activation of transcription. Monomers suppress local silencing by interacting with and inactivating host adenosine kinase 2 (ADK2) in the cytoplasm. Interacts with and inhibits host SNF1 kinase. Binds to ssDNA. Post-translationally, phosphorylated.

Its subcellular location is the host nucleus. It localises to the host cytoplasm. In terms of biological role, strong activator of the late viral genes promoters. Enhances the expression of the capsid protein and nuclear shuttle protein. Acts as a suppressor of RNA-mediated gene silencing, also known as post-transcriptional gene silencing (PTGS), a mechanism of plant viral defense that limits the accumulation of viral RNAs. Suppresses the host RNA silencing by inhibiting adenosine kinase 2 (ADK2), a kinase involved in a general methylation pathway. Also suppresses the host basal defense by interacting with and inhibiting SNF1 kinase, a key regulator of cell metabolism implicated in innate antiviral defense. Determines pathogenicity. This is Transcriptional activator protein from Bean golden yellow mosaic virus (isolate Puerto Rico-Japan) (BGYMV).